The sequence spans 111 residues: Ig kappa chain V-III region MOPC 70 (111 aa).

Positions 1–23 (DIVLTQSPASLAVSLGQRATISC) are framework-1. An intrachain disulfide couples C23 to C92. The segment at 24–38 (RASESVDNSGISFMN) is complementarity-determining-1. The framework-2 stretch occupies residues 39 to 53 (WFQQKPGQPPKLLIY). The interval 54–60 (AASNQGS) is complementarity-determining-2. Positions 61–92 (GVPARFSGSGSGTDFSLNIHPMEEDDTAMYFC) are framework-3. Residues 93-101 (QQSKEVPWT) are complementarity-determining-3. The framework-4 stretch occupies residues 102–111 (FGGGTKLEIK).

The sequence is that of Ig kappa chain V-III region MOPC 70 from Mus musculus (Mouse).